A 314-amino-acid chain; its full sequence is Protoheme IX farnesyltransferase 2 (314 aa).

The next 9 helical transmembrane spans lie at 32 to 49 (VMSL…AAPV), 54 to 76 (LLAV…LNMW), 98 to 118 (IQPH…VMTL), 120 to 140 (VLVN…YAVV), 153 to 173 (IVIG…AVTG), 180 to 200 (IVLF…LALF), 226 to 246 (IFAY…LGYT), 249 to 269 (FYGV…WKVL), and 285 to 305 (FAYS…DSVV).

Belongs to the UbiA prenyltransferase family. Protoheme IX farnesyltransferase subfamily.

The protein localises to the cell inner membrane. The enzyme catalyses heme b + (2E,6E)-farnesyl diphosphate + H2O = Fe(II)-heme o + diphosphate. It participates in porphyrin-containing compound metabolism; heme O biosynthesis; heme O from protoheme: step 1/1. Converts heme B (protoheme IX) to heme O by substitution of the vinyl group on carbon 2 of heme B porphyrin ring with a hydroxyethyl farnesyl side group. This Mesorhizobium japonicum (strain LMG 29417 / CECT 9101 / MAFF 303099) (Mesorhizobium loti (strain MAFF 303099)) protein is Protoheme IX farnesyltransferase 2.